A 302-amino-acid chain; its full sequence is Heme A synthase (302 aa).

At 1–8 (MFRKQNLK) the chain is on the cytoplasmic side. The helical transmembrane segment at 9–29 (WLGVLATIIMTFVQLGGALVT) threads the bilayer. At 30 to 67 (KTGSEDGCGSSWPLCNGALLPENLPIQTIIELSHRAVS) the chain is on the extracellular side. Cysteines 37 and 44 form a disulfide. Glu-60 is a catalytic residue. His-63 is a binding site for heme o. The chain crosses the membrane as a helical span at residues 68–88 (AISLIVVLWLVITAWKNIGYI). Over 89–93 (KEIKP) the chain is Cytoplasmic. The helical transmembrane segment at 94-114 (LSIISVGFLLVQALVGAAAVI) threads the bilayer. Residues 115–125 (WQQNPYVLALH) are Extracellular-facing. Residue His-125 participates in heme o binding. A helical transmembrane segment spans residues 126–146 (FGISLISFSSVFLMTLIIFSI). The Cytoplasmic portion of the chain corresponds to 147–161 (DKKYEADILFIHKPL). A helical transmembrane segment spans residues 162 to 182 (RILTWLMAIIVYLTIYTGALV). At 183–215 (RHTKSSLAYGAWPIPFDDIVPHNAHDWVQFSHR) the chain is on the extracellular side. His-214 lines the heme b pocket. Residues 216–236 (GMALITFIWIMITFIHAIKNY) traverse the membrane as a helical segment. The Cytoplasmic segment spans residues 237–244 (SDNRTVRY). A helical membrane pass occupies residues 245-265 (GYTASFILVILQVITGALSVI). Residues 266–270 (TNVNL) lie on the Extracellular side of the membrane. Residues 271 to 291 (IIALFHALFITYLFGMIAYFI) traverse the membrane as a helical segment. His-276 serves as a coordination point for heme b. Residues 292–302 (LLMLRTTRSQK) are Cytoplasmic-facing.

The protein belongs to the COX15/CtaA family. Type 1 subfamily. As to quaternary structure, interacts with CtaB. Requires heme b as cofactor.

It localises to the cell membrane. The enzyme catalyses Fe(II)-heme o + 2 A + H2O = Fe(II)-heme a + 2 AH2. It functions in the pathway porphyrin-containing compound metabolism; heme A biosynthesis; heme A from heme O: step 1/1. Functionally, catalyzes the conversion of heme O to heme A by two successive hydroxylations of the methyl group at C8. The first hydroxylation forms heme I, the second hydroxylation results in an unstable dihydroxymethyl group, which spontaneously dehydrates, resulting in the formyl group of heme A. This chain is Heme A synthase, found in Staphylococcus epidermidis (strain ATCC 35984 / DSM 28319 / BCRC 17069 / CCUG 31568 / BM 3577 / RP62A).